The following is a 209-amino-acid chain: Imidazoleglycerol-phosphate dehydratase (209 aa).

Residues 1 to 23 (MQLSDRPLTAPGTAPRQATVSRR) are disordered.

Belongs to the imidazoleglycerol-phosphate dehydratase family.

It localises to the cytoplasm. The enzyme catalyses D-erythro-1-(imidazol-4-yl)glycerol 3-phosphate = 3-(imidazol-4-yl)-2-oxopropyl phosphate + H2O. The protein operates within amino-acid biosynthesis; L-histidine biosynthesis; L-histidine from 5-phospho-alpha-D-ribose 1-diphosphate: step 6/9. The sequence is that of Imidazoleglycerol-phosphate dehydratase from Synechococcus elongatus (strain ATCC 33912 / PCC 7942 / FACHB-805) (Anacystis nidulans R2).